The primary structure comprises 557 residues: Nucleoprotein (557 aa).

The binding site for the cap structure m7GTP stretch occupies residues 54–235 (MRKDKRSDDD…ITKEESANNI (182 aa)). Mn(2+) contacts are provided by aspartate 379 and glutamate 381. Positions 389, 496, 499, and 518 each coordinate Zn(2+). Mn(2+) is bound at residue aspartate 522.

Belongs to the arenaviridae nucleocapsid protein family. In terms of assembly, homomultimerizes to form the nucleocapsid. Binds to viral genomic RNA. Interacts with glycoprotein G2. Interacts with protein Z; this interaction probably directs the encapsidated genome to budding sites. Interacts with protein L; this interaction does not interfere with Z-L interaction. Interacts with host IKBKE (via Protein kinase domain); the interaction inhibits IKBKE kinase activity.

The protein resides in the virion. It localises to the host cytoplasm. Encapsidates the genome, protecting it from nucleases. The encapsidated genomic RNA is termed the nucleocapsid (NC). Serves as template for viral transcription and replication. The increased presence of protein N in host cell does not seem to trigger the switch from transcription to replication as observed in other negative strain RNA viruses. Through the interaction with host IKBKE, strongly inhibits the phosphorylation and nuclear translocation of host IRF3, a protein involved in interferon activation pathway, leading to the inhibition of interferon-beta and IRF3-dependent promoters activation. Also encodes a functional 3'-5' exoribonuclease that degrades preferentially dsRNA substrates and thereby participates in the suppression of interferon induction. This chain is Nucleoprotein, found in Calomys callosus (Large vesper mouse).